Consider the following 336-residue polypeptide: UDP-N-acetylglucosamine--N-acetylmuramyl-(pentapeptide) pyrophosphoryl-undecaprenol N-acetylglucosamine transferase (336 aa).

Residues Asn102, Arg144, Ser172, and Gln264 each contribute to the UDP-N-acetyl-alpha-D-glucosamine site.

Belongs to the glycosyltransferase 28 family. MurG subfamily.

The protein resides in the cell membrane. It catalyses the reaction di-trans,octa-cis-undecaprenyl diphospho-N-acetyl-alpha-D-muramoyl-L-alanyl-D-glutamyl-meso-2,6-diaminopimeloyl-D-alanyl-D-alanine + UDP-N-acetyl-alpha-D-glucosamine = di-trans,octa-cis-undecaprenyl diphospho-[N-acetyl-alpha-D-glucosaminyl-(1-&gt;4)]-N-acetyl-alpha-D-muramoyl-L-alanyl-D-glutamyl-meso-2,6-diaminopimeloyl-D-alanyl-D-alanine + UDP + H(+). The protein operates within cell wall biogenesis; peptidoglycan biosynthesis. Its function is as follows. Cell wall formation. Catalyzes the transfer of a GlcNAc subunit on undecaprenyl-pyrophosphoryl-MurNAc-pentapeptide (lipid intermediate I) to form undecaprenyl-pyrophosphoryl-MurNAc-(pentapeptide)GlcNAc (lipid intermediate II). The sequence is that of UDP-N-acetylglucosamine--N-acetylmuramyl-(pentapeptide) pyrophosphoryl-undecaprenol N-acetylglucosamine transferase from Rubrobacter xylanophilus (strain DSM 9941 / JCM 11954 / NBRC 16129 / PRD-1).